The primary structure comprises 487 residues: NADH-quinone oxidoreductase subunit N (487 aa).

Transmembrane regions (helical) follow at residues 18–38 (LVPE…DLFV), 44–64 (VWTH…LATG), 84–104 (VMKT…WTYL), 116–136 (VLVL…SLLM), 169–189 (FVLG…VYGA), 211–231 (LLTG…AAPF), 242–262 (APAP…FGMA), 277–297 (WHLL…LMAI), 305–325 (MLAY…AGGG), 333–353 (MFYA…IIAL), 377–397 (AGLV…LGFW), 410–430 (DMLW…YYYL), and 457–477 (VLGV…PIMV).

The protein belongs to the complex I subunit 2 family. As to quaternary structure, NDH-1 is composed of 14 different subunits. Subunits NuoA, H, J, K, L, M, N constitute the membrane sector of the complex.

The protein localises to the cell inner membrane. The enzyme catalyses a quinone + NADH + 5 H(+)(in) = a quinol + NAD(+) + 4 H(+)(out). Functionally, NDH-1 shuttles electrons from NADH, via FMN and iron-sulfur (Fe-S) centers, to quinones in the respiratory chain. The immediate electron acceptor for the enzyme in this species is believed to be ubiquinone. Couples the redox reaction to proton translocation (for every two electrons transferred, four hydrogen ions are translocated across the cytoplasmic membrane), and thus conserves the redox energy in a proton gradient. This is NADH-quinone oxidoreductase subunit N from Xanthomonas euvesicatoria pv. vesicatoria (strain 85-10) (Xanthomonas campestris pv. vesicatoria).